Reading from the N-terminus, the 508-residue chain is POTE ankyrin domain family member G (508 aa).

ANK repeat units follow at residues 172–201 (QKRTALHLASANGNSEVVKLLLDRRCQLNI), 205–234 (KKRTALTKAVQCREDECALMLLEHGTDPNI), 238–267 (YGNTALHYAIYNEDKLMAKALLLYGADIES), 271–300 (HGLTPLLLGVHEQKQQVVKFLIKKKANLNA), and 304–333 (YGRTALILAVCCGSASIVSLLLEQNIDVSS). Polar residues predominate over residues 367–376 (KVSSENSNPE). Residues 367-488 (KVSSENSNPE…QLSEEQNTGI (122 aa)) form a disordered region. Composition is skewed to basic and acidic residues over residues 377–392 (QDLKLTSEEESQRLKG) and 406–421 (EINKGGDRKVEEEMKK). The span at 476 to 488 (TQKQLSEEQNTGI) shows a compositional bias: polar residues.

It belongs to the POTE family.

The chain is POTE ankyrin domain family member G (POTEG) from Homo sapiens (Human).